A 239-amino-acid polypeptide reads, in one-letter code: 1-(5-phosphoribosyl)-5-[(5-phosphoribosylamino)methylideneamino] imidazole-4-carboxamide isomerase (239 aa).

Aspartate 8 serves as the catalytic Proton acceptor. Aspartate 129 (proton donor) is an active-site residue.

This sequence belongs to the HisA/HisF family.

It is found in the cytoplasm. It carries out the reaction 1-(5-phospho-beta-D-ribosyl)-5-[(5-phospho-beta-D-ribosylamino)methylideneamino]imidazole-4-carboxamide = 5-[(5-phospho-1-deoxy-D-ribulos-1-ylimino)methylamino]-1-(5-phospho-beta-D-ribosyl)imidazole-4-carboxamide. The protein operates within amino-acid biosynthesis; L-histidine biosynthesis; L-histidine from 5-phospho-alpha-D-ribose 1-diphosphate: step 4/9. This is 1-(5-phosphoribosyl)-5-[(5-phosphoribosylamino)methylideneamino] imidazole-4-carboxamide isomerase from Cereibacter sphaeroides (strain ATCC 17025 / ATH 2.4.3) (Rhodobacter sphaeroides).